A 1019-amino-acid chain; its full sequence is Photoactivated adenylate cyclase subunit alpha-like protein ST- (1019 aa).

Positions leucine 55–lysine 148 constitute a BLUF 1 domain. The Guanylate cyclase 1 domain maps to valine 204–threonine 332. The BLUF 2 domain maps to leucine 467–threonine 559. The region spanning valine 615–glutamate 744 is the Guanylate cyclase 2 domain. Disordered stretches follow at residues glutamate 801–histidine 846, glutamine 887–alanine 923, and glutamate 963–threonine 993. Basic residues predominate over residues arginine 821–histidine 834.

This sequence belongs to the adenylyl cyclase class-4/guanylyl cyclase family. In terms of assembly, heterotetramer of two alpha and two beta subunits.

It localises to the cell projection. The protein resides in the cilium. Its subcellular location is the flagellum. This is Photoactivated adenylate cyclase subunit alpha-like protein ST- from Euglena gracilis.